The sequence spans 394 residues: Na(+)/H(+) antiporter NhaA (394 aa).

Transmembrane regions (helical) follow at residues 14–34 (AGGL…NSAL), 59–79 (LLLW…GLEV), 95–115 (VFPA…YLLF), 125–145 (GWAI…ALLG), 154–174 (VFLL…IALF), 179–199 (VSLQ…YMNW), 213–233 (LVLW…GVIV), 254–274 (GLHP…NAGV), 292–312 (IATG…WLAV), 328–348 (IFAV…IASL), and 363–383 (LGIL…LRLV).

Belongs to the NhaA Na(+)/H(+) (TC 2.A.33) antiporter family.

It is found in the cell inner membrane. It carries out the reaction Na(+)(in) + 2 H(+)(out) = Na(+)(out) + 2 H(+)(in). Na(+)/H(+) antiporter that extrudes sodium in exchange for external protons. This is Na(+)/H(+) antiporter NhaA from Yersinia pestis bv. Antiqua (strain Antiqua).